Reading from the N-terminus, the 330-residue chain is DNA-directed RNA polymerase subunit alpha (330 aa).

The tract at residues 1 to 236 is alpha N-terminal domain (alpha-NTD); it reads MQGSVTEFLK…EQLDAFVDLR (236 aa). Positions 250–330 are alpha C-terminal domain (alpha-CTD); it reads FDPILLRPVD…NWPPASIAED (81 aa).

Belongs to the RNA polymerase alpha chain family. As to quaternary structure, homodimer. The RNAP catalytic core consists of 2 alpha, 1 beta, 1 beta' and 1 omega subunit. When a sigma factor is associated with the core the holoenzyme is formed, which can initiate transcription.

The catalysed reaction is RNA(n) + a ribonucleoside 5'-triphosphate = RNA(n+1) + diphosphate. Functionally, DNA-dependent RNA polymerase catalyzes the transcription of DNA into RNA using the four ribonucleoside triphosphates as substrates. This chain is DNA-directed RNA polymerase subunit alpha, found in Vibrio campbellii (strain ATCC BAA-1116).